The chain runs to 475 residues: Sulfate adenylyltransferase subunit 1 (475 aa).

Residues 25–239 (KSLLRFLTCG…EVLETVEIQR (215 aa)) form the tr-type G domain. The G1 stretch occupies residues 34–41 (GSVDDGKS). Residue 34-41 (GSVDDGKS) coordinates GTP. The tract at residues 92 to 96 (GITID) is G2. The segment at 113-116 (DTPG) is G3. GTP contacts are provided by residues 113-117 (DTPGH) and 168-171 (NKMD). The G4 stretch occupies residues 168 to 171 (NKMD). The G5 stretch occupies residues 206 to 208 (SAL).

Belongs to the TRAFAC class translation factor GTPase superfamily. Classic translation factor GTPase family. CysN/NodQ subfamily. In terms of assembly, heterodimer composed of CysD, the smaller subunit, and CysN.

The catalysed reaction is sulfate + ATP + H(+) = adenosine 5'-phosphosulfate + diphosphate. It functions in the pathway sulfur metabolism; hydrogen sulfide biosynthesis; sulfite from sulfate: step 1/3. With CysD forms the ATP sulfurylase (ATPS) that catalyzes the adenylation of sulfate producing adenosine 5'-phosphosulfate (APS) and diphosphate, the first enzymatic step in sulfur assimilation pathway. APS synthesis involves the formation of a high-energy phosphoric-sulfuric acid anhydride bond driven by GTP hydrolysis by CysN coupled to ATP hydrolysis by CysD. The protein is Sulfate adenylyltransferase subunit 1 of Escherichia coli (strain 55989 / EAEC).